The chain runs to 65 residues: Large ribosomal subunit protein bL35 (65 aa).

The interval 1-26 (MPKMKTNRASAKRFKKTASGGFKAGQ) is disordered.

It belongs to the bacterial ribosomal protein bL35 family.

The chain is Large ribosomal subunit protein bL35 from Oenococcus oeni (strain ATCC BAA-331 / PSU-1).